A 713-amino-acid polypeptide reads, in one-letter code: Calpastatin (713 aa).

Low complexity predominate over residues Met-1–Ser-21. A disordered region spans residues Met-1–Gly-152. Positions Val-47 to Gly-64 are enriched in polar residues. Residue Ser-57 is modified to Phosphoserine. Residue Lys-69 forms a Glycyl lysine isopeptide (Lys-Gly) (interchain with G-Cter in SUMO2) linkage. Lys-86 carries the N6-acetyllysine modification. Residues Ser-120 to Glu-129 are compositionally biased toward polar residues. 2 positions are modified to phosphoserine: Ser-122 and Ser-171. Thr-173 is modified (phosphothreonine). One copy of the Inhibitory domain 1 repeat lies at Thr-208 to Ser-260. Residues Ile-253–Glu-402 form a disordered region. A phosphoserine mark is found at Ser-260 and Ser-281. Polar residues-rich tracts occupy residues Ser-275–Lys-285, Gly-294–Val-304, and Gln-326–Leu-346. An Inhibitory domain 2 repeat occupies Asp-341 to Pro-393. Basic and acidic residues-rich tracts occupy residues Gln-351–Cys-365 and Tyr-376–Lys-387. Residues Ser-401, Ser-403, Ser-410, and Ser-445 each carry the phosphoserine modification. The disordered stretch occupies residues Leu-442–Gln-507. The span at Thr-448–Glu-505 shows a compositional bias: basic and acidic residues. The Inhibitory domain 3 repeat unit spans residues Glu-451–Ala-504. Residues Ser-521 and Ser-532 each carry the phosphoserine modification. Over residues Val-544 to Thr-558 the composition is skewed to polar residues. Residues Val-544–Thr-713 form a disordered region. Ser-580 and Ser-582 each carry phosphoserine. Residues Pro-588–Lys-641 form an Inhibitory domain 4 repeat. Composition is skewed to basic and acidic residues over residues Pro-588–Gln-648 and Ser-687–Thr-713.

Belongs to the protease inhibitor I27 (calpastatin) family.

Its function is as follows. Specific inhibition of calpain (calcium-dependent cysteine protease). Plays a key role in postmortem tenderization of meat and have been proposed to be involved in muscle protein degradation in living tissue. In Rattus norvegicus (Rat), this protein is Calpastatin (Cast).